The primary structure comprises 699 residues: Polyribonucleotide nucleotidyltransferase (699 aa).

Mg(2+) contacts are provided by aspartate 485 and aspartate 491. One can recognise a KH domain in the interval 552–611; it reads PRITTIKINPEKIRDVIGKGGAVIRALTEETGTTIELEDDGTVKIASSNGEATKEAIRRI. One can recognise an S1 motif domain in the interval 621-689; that stretch reads GRIYNGKVIR…RQGRVRLSIK (69 aa).

Belongs to the polyribonucleotide nucleotidyltransferase family. Component of the RNA degradosome, which is a multiprotein complex involved in RNA processing and mRNA degradation. Mg(2+) serves as cofactor.

The protein resides in the cytoplasm. It carries out the reaction RNA(n+1) + phosphate = RNA(n) + a ribonucleoside 5'-diphosphate. Its function is as follows. Involved in mRNA degradation. Catalyzes the phosphorolysis of single-stranded polyribonucleotides processively in the 3'- to 5'-direction. The sequence is that of Polyribonucleotide nucleotidyltransferase from Shewanella oneidensis (strain ATCC 700550 / JCM 31522 / CIP 106686 / LMG 19005 / NCIMB 14063 / MR-1).